The primary structure comprises 178 residues: Cytochrome b6-f complex iron-sulfur subunit 1 (178 aa).

A helical membrane pass occupies residues 17 to 36; that stretch reads LLNFLAGTTVAVTASAGAYA. In terms of domain architecture, Rieske spans 61 to 161; it reads GNPIPASQIL…VAVVDDQIFI (101 aa). Residues Cys107, His109, Cys125, and His128 each contribute to the [2Fe-2S] cluster site. Cys112 and Cys127 are joined by a disulfide.

This sequence belongs to the Rieske iron-sulfur protein family. In terms of assembly, the 4 large subunits of the cytochrome b6-f complex are cytochrome b6, subunit IV (17 kDa polypeptide, PetD), cytochrome f and the Rieske protein, while the 4 small subunits are PetG, PetL, PetM and PetN. The complex functions as a dimer. Requires [2Fe-2S] cluster as cofactor.

The protein resides in the cellular thylakoid membrane. The catalysed reaction is 2 oxidized [plastocyanin] + a plastoquinol + 2 H(+)(in) = 2 reduced [plastocyanin] + a plastoquinone + 4 H(+)(out). Its function is as follows. Component of the cytochrome b6-f complex, which mediates electron transfer between photosystem II (PSII) and photosystem I (PSI), cyclic electron flow around PSI, and state transitions. This is Cytochrome b6-f complex iron-sulfur subunit 1 from Synechocystis sp. (strain ATCC 27184 / PCC 6803 / Kazusa).